Reading from the N-terminus, the 166-residue chain is Ferric nitrobindin-like protein (166 aa).

The GXWXGXG motif lies at 21–27 (GHWEGEG).

This sequence belongs to the nitrobindin family.

The polypeptide is Ferric nitrobindin-like protein (Cutibacterium acnes (strain DSM 16379 / KPA171202) (Propionibacterium acnes)).